The primary structure comprises 245 residues: tRNA pseudouridine synthase A (245 aa).

Asp52 (nucleophile) is an active-site residue. Residue Tyr111 participates in substrate binding.

It belongs to the tRNA pseudouridine synthase TruA family. In terms of assembly, homodimer.

The catalysed reaction is uridine(38/39/40) in tRNA = pseudouridine(38/39/40) in tRNA. In terms of biological role, formation of pseudouridine at positions 38, 39 and 40 in the anticodon stem and loop of transfer RNAs. The sequence is that of tRNA pseudouridine synthase A from Rickettsia typhi (strain ATCC VR-144 / Wilmington).